Reading from the N-terminus, the 714-residue chain is Glutamine-dependent NAD(+) synthetase (714 aa).

A CN hydrolase domain is found at 5 to 275; sequence ITLATCNLNQ…VEVVTATVDL (271 aa). Glutamate 45 acts as the Proton acceptor; for glutaminase activity in catalysis. The active-site For glutaminase activity is lysine 114. Residue cysteine 175 is the Nucleophile; for glutaminase activity of the active site. The segment at 329-714 is ligase; sequence YHSPEEEIAL…GSTLDIMSID (386 aa). 359-366 contacts ATP; that stretch reads PLSGGIDS. Residue serine 361 is part of the active site.

It in the C-terminal section; belongs to the NAD synthetase family.

The catalysed reaction is deamido-NAD(+) + L-glutamine + ATP + H2O = L-glutamate + AMP + diphosphate + NAD(+) + H(+). The protein operates within cofactor biosynthesis; NAD(+) biosynthesis; NAD(+) from deamido-NAD(+) (L-Gln route): step 1/1. This is Glutamine-dependent NAD(+) synthetase (QNS1) from Saccharomyces cerevisiae (strain ATCC 204508 / S288c) (Baker's yeast).